Consider the following 439-residue polypeptide: MRGAYYVLAALLVVASSQIAAEFGHQLPVYDDGIMAARNAVVKTLPKRYLRGGHDVHDDSANEERSLYSVLVSLINEGVMKLPRATEELNMMPRAADDVEVMFRPAEVNEEMPHITKEELKKASKSAKEALKKLWKPASRTAADGHASHDIPTGEKLYLDLEAWDIKEFHMRGGSVIKKHRSMIASVHQEFLNLCDPNLHPTAAETSLLWGMFHWKPELCTIEIHGRNLMRLAKRDVQKGVLKITSNELLDNQWNQLSDTHKLSVQNCLLNLYYQRWVRMYNIFKRNRPDLIAAPLNLELNLGTSSALALRKHSQVPSNAASTSNVKSSVITKRSKRTFDSNTGTISLSSKQAKMQSSKSVVPLLTGATTSGEHVVPMQNLKLSLGGPSGGFAPYEPPKAHSLKSLTPASTALTLEDSETKLSLGGIYDKRTDKAPSVP.

A signal peptide spans 1–21; the sequence is MRGAYYVLAALLVVASSQIAA. The short motif at 48 to 65 is the RxLR-dEER element; the sequence is RYLRGGHDVHDDSANEER.

It belongs to the RxLR effector family.

The protein resides in the secreted. The protein localises to the host nucleus. Secreted effector that acts as an elicitor that induces cell death in host plant cells. In Plasmopara viticola (Downy mildew of grapevine), this protein is Secreted RxLR effector protein 117.